Here is a 632-residue protein sequence, read N- to C-terminus: Sporulenol synthase (632 aa).

The active-site Proton donor is D377. 3 PFTB repeats span residues 395 to 436 (WERG…EDAA), 465 to 505 (IQRA…HACG), and 513 to 554 (IQKA…VQTA).

This sequence belongs to the terpene cyclase/mutase family.

The protein localises to the cell membrane. It catalyses the reaction sporulenol = (R)-tetraprenyl-beta-curcumene + H2O. The protein operates within secondary metabolite biosynthesis; hopanoid biosynthesis. Catalyzes the cyclization of tetraprenyl beta-curcumene into sporulenol. In Bacillus subtilis (strain 168), this protein is Sporulenol synthase (sqhC).